We begin with the raw amino-acid sequence, 122 residues long: Ribosome-binding factor A (122 aa).

Belongs to the RbfA family. As to quaternary structure, monomer. Binds 30S ribosomal subunits, but not 50S ribosomal subunits or 70S ribosomes.

Its subcellular location is the cytoplasm. One of several proteins that assist in the late maturation steps of the functional core of the 30S ribosomal subunit. Associates with free 30S ribosomal subunits (but not with 30S subunits that are part of 70S ribosomes or polysomes). Required for efficient processing of 16S rRNA. May interact with the 5'-terminal helix region of 16S rRNA. This Moorella thermoacetica (strain ATCC 39073 / JCM 9320) protein is Ribosome-binding factor A.